The primary structure comprises 146 residues: Anti-sigma F factor (146 aa).

This sequence belongs to the anti-sigma-factor family.

It carries out the reaction L-seryl-[protein] + ATP = O-phospho-L-seryl-[protein] + ADP + H(+). The enzyme catalyses L-threonyl-[protein] + ATP = O-phospho-L-threonyl-[protein] + ADP + H(+). Its function is as follows. Binds to sigma F and blocks its ability to form an RNA polymerase holoenzyme (E-sigma F). Phosphorylates SpoIIAA on a serine residue. This phosphorylation may enable SpoIIAA to act as an anti-anti-sigma factor that counteracts SpoIIAB and thus releases sigma F from inhibition. This Shouchella clausii (strain KSM-K16) (Alkalihalobacillus clausii) protein is Anti-sigma F factor.